The primary structure comprises 264 residues: Glutamate racemase (264 aa).

Substrate contacts are provided by residues 12 to 13 (DS) and 44 to 45 (YG). Residue Cys75 is the Proton donor/acceptor of the active site. Residue 76–77 (NT) participates in substrate binding. Cys186 (proton donor/acceptor) is an active-site residue. Position 187–188 (187–188 (TH)) interacts with substrate.

Belongs to the aspartate/glutamate racemases family.

It carries out the reaction L-glutamate = D-glutamate. It functions in the pathway cell wall biogenesis; peptidoglycan biosynthesis. Provides the (R)-glutamate required for cell wall biosynthesis. The sequence is that of Glutamate racemase from Stutzerimonas stutzeri (strain A1501) (Pseudomonas stutzeri).